Reading from the N-terminus, the 305-residue chain is Ribonuclease Z (305 aa).

Positions 61, 63, 65, 66, 138, 208, and 266 each coordinate Zn(2+). Asp-65 functions as the Proton acceptor in the catalytic mechanism.

Belongs to the RNase Z family. In terms of assembly, homodimer. It depends on Zn(2+) as a cofactor.

The enzyme catalyses Endonucleolytic cleavage of RNA, removing extra 3' nucleotides from tRNA precursor, generating 3' termini of tRNAs. A 3'-hydroxy group is left at the tRNA terminus and a 5'-phosphoryl group is left at the trailer molecule.. Its function is as follows. Zinc phosphodiesterase, which displays some tRNA 3'-processing endonuclease activity. Probably involved in tRNA maturation, by removing a 3'-trailer from precursor tRNA. This Methanosarcina acetivorans (strain ATCC 35395 / DSM 2834 / JCM 12185 / C2A) protein is Ribonuclease Z.